The sequence spans 213 residues: Thiopurine S-methyltransferase (213 aa).

W10, L45, E66, and R121 together coordinate S-adenosyl-L-methionine.

It belongs to the class I-like SAM-binding methyltransferase superfamily. TPMT family.

The protein localises to the cytoplasm. The catalysed reaction is S-adenosyl-L-methionine + a thiopurine = S-adenosyl-L-homocysteine + a thiopurine S-methylether.. The chain is Thiopurine S-methyltransferase from Aliivibrio salmonicida (strain LFI1238) (Vibrio salmonicida (strain LFI1238)).